The chain runs to 178 residues: Cytidylate kinase (178 aa).

7–15 contacts ATP; sequence GLPGTGTTT.

Belongs to the cytidylate kinase family. Type 2 subfamily.

It localises to the cytoplasm. It catalyses the reaction CMP + ATP = CDP + ADP. The enzyme catalyses dCMP + ATP = dCDP + ADP. This Methanococcus maripaludis (strain C5 / ATCC BAA-1333) protein is Cytidylate kinase.